The sequence spans 732 residues: MMWTWALWMLPSLCKFSLAALPAKPENISCVYYYRKNLTCTWSPGKETSYTQYTVKRTYAFGEKHDNCTTNSSTSENRASCSFFLPRITIPDNYTIEVEAENGDGVIKSHMTYWRLENIAKTEPPKIFRVKPVLGIKRMIQIEWIKPELAPVSSDLKYTLRFRTVNSTSWMEVNFAKNRKDKNQTYNLTGLQPFTEYVIALRCAVKESKFWSDWSQEKMGMTEEEAPCGLELWRVLKPAEADGRRPVRLLWKKARGAPVLEKTLGYNIWYYPESNTNLTETMNTTNQQLELHLGGESFWVSMISYNSLGKSPVATLRIPAIQEKSFQCIEVMQACVAEDQLVVKWQSSALDVNTWMIEWFPDVDSEPTTLSWESVSQATNWTIQQDKLKPFWCYNISVYPMLHDKVGEPYSIQAYAKEGVPSEGPETKVENIGVKTVTITWKEIPKSERKGIICNYTIFYQAEGGKGFSKTVNSSILQYGLESLKRKTSYIVQVMASTSAGGTNGTSINFKTLSFSVFEIILITSLIGGGLLILIILTVAYGLKKPNKLTHLCWPTVPNPAESSIATWHGDDFKDKLNLKESDDSVNTEDRILKPCSTPSDKLVIDKLVVNFGNVLQEIFTDEARTGQENNLGGEKNGYVTCPFRPDCPLGKSFEELPVSPEIPPRKSQYLRSRMPEGTRPEAKEQLLFSGQSLVPDHLCEEGAPNPYLKNSVTAREFLVSEKLPEHTKGEV.

A signal peptide spans 1 to 19 (MMWTWALWMLPSLCKFSLA). At 20-519 (ALPAKPENIS…FKTLSFSVFE (500 aa)) the chain is on the extracellular side. Fibronectin type-III domains follow at residues 24–122 (KPEN…IAKT), 124–225 (PPKI…TEEE), 223–315 (EEEA…PVAT), 319–416 (PAIQ…QAYA), and 421–515 (PSEG…TLSF). 10 N-linked (GlcNAc...) asparagine glycosylation sites follow: asparagine 37, asparagine 67, asparagine 93, asparagine 166, asparagine 187, asparagine 277, asparagine 283, asparagine 395, asparagine 455, and asparagine 504. Residues 520–540 (IILITSLIGGGLLILIILTVA) traverse the membrane as a helical segment. The Cytoplasmic portion of the chain corresponds to 541–732 (YGLKKPNKLT…KLPEHTKGEV (192 aa)).

This sequence belongs to the type I cytokine receptor family. Type 2 subfamily. Heterodimer with OSMR. Interacts with JAK1 and STAT3. N-glycosylated. As to expression, expressed in CD14- and CD56-positive blood cells. Expressed in macrophages. Expressed in keratinocytes. Expressed in a subset of dorsal root ganglia neurons (at protein level). Expressed at low levels in testis, ovary, brain, prostate, placenta, thymus, bone marrow, trachea and skin. Expressed in bronchial and alveolar epithelial cells and pulmonary fibroblasts. Detected in all of the myelomonocytic lineage. Isoform 6: Expressed at higher levels in lesional skin compared to healthy skin of atopic dermatitis patients.

The protein resides in the cell membrane. It localises to the presynaptic cell membrane. Its subcellular location is the cell projection. It is found in the axon. In terms of biological role, associates with OSMR to form the interleukin-31 receptor which activates STAT3 and to a lower extent STAT1 and STAT5. May function in skin immunity. Mediates IL31-induced itch, probably in a manner dependent on cation channels TRPA1 and TRPV1. Positively regulates numbers and cycling status of immature subsets of myeloid progenitor cells in bone marrow in vivo and enhances myeloid progenitor cell survival in vitro. The protein is Interleukin-31 receptor subunit alpha (IL31RA) of Homo sapiens (Human).